The chain runs to 330 residues: Ketol-acid reductoisomerase (NADP(+)) (330 aa).

Residues Met2 to Thr181 form the KARI N-terminal Rossmann domain. Residues Tyr25–Gln28, Arg48, Ser52, and Asp82–Gln85 contribute to the NADP(+) site. The active site involves His107. Position 133 (Gly133) interacts with NADP(+). Residues Thr182–Phe327 form the KARI C-terminal knotted domain. Mg(2+) contacts are provided by Asp190, Glu194, Glu226, and Glu230. Substrate is bound at residue Ser251.

Belongs to the ketol-acid reductoisomerase family. Mg(2+) serves as cofactor.

The catalysed reaction is (2R)-2,3-dihydroxy-3-methylbutanoate + NADP(+) = (2S)-2-acetolactate + NADPH + H(+). It carries out the reaction (2R,3R)-2,3-dihydroxy-3-methylpentanoate + NADP(+) = (S)-2-ethyl-2-hydroxy-3-oxobutanoate + NADPH + H(+). It functions in the pathway amino-acid biosynthesis; L-isoleucine biosynthesis; L-isoleucine from 2-oxobutanoate: step 2/4. Its pathway is amino-acid biosynthesis; L-valine biosynthesis; L-valine from pyruvate: step 2/4. Its function is as follows. Involved in the biosynthesis of branched-chain amino acids (BCAA). Catalyzes an alkyl-migration followed by a ketol-acid reduction of (S)-2-acetolactate (S2AL) to yield (R)-2,3-dihydroxy-isovalerate. In the isomerase reaction, S2AL is rearranged via a Mg-dependent methyl migration to produce 3-hydroxy-3-methyl-2-ketobutyrate (HMKB). In the reductase reaction, this 2-ketoacid undergoes a metal-dependent reduction by NADPH to yield (R)-2,3-dihydroxy-isovalerate. This Methanocorpusculum labreanum (strain ATCC 43576 / DSM 4855 / Z) protein is Ketol-acid reductoisomerase (NADP(+)).